The sequence spans 249 residues: Protein ZPS1 (249 aa).

The N-terminal stretch at 1–20 (MKFSSGKSIIFATIASLALS) is a signal peptide. Residues asparagine 28, asparagine 57, asparagine 98, and asparagine 217 are each glycosylated (N-linked (GlcNAc...) asparagine).

The protein belongs to the ZPS1 family.

The protein is Protein ZPS1 (ZPS1) of Saccharomyces cerevisiae (strain ATCC 204508 / S288c) (Baker's yeast).